The sequence spans 80 residues: Putative membrane protein insertion efficiency factor (80 aa).

Residues 61–80 (KTGKDPVPDRFSLKRNQEGE) form a disordered region. Residues 62-80 (TGKDPVPDRFSLKRNQEGE) show a composition bias toward basic and acidic residues.

Belongs to the UPF0161 family.

Its subcellular location is the cell membrane. Its function is as follows. Could be involved in insertion of integral membrane proteins into the membrane. The sequence is that of Putative membrane protein insertion efficiency factor from Streptococcus pneumoniae (strain P1031).